A 556-amino-acid chain; its full sequence is MLRSNAITQGIQRSPNRAMLRAVGFDDNDFNKPIIGIANGHSTITPCNMGLMDLANRAESALKEAGAMPQTFGTITVSDGISMGTEGMKYSLVSREVIADSIETACNAQSMDGVLAIGGCDKNMPGAMLSMARMNIPSIFVYGGTIKPGKLDGCDLTVVSSFEAVGQLASGKIDKDRLIAVEKNAIPGPGSCGGMFTANTMSAAIETMGFSLPFSSTMAAVDDEKAESAAESAQVLVNAVKNNIRPLDLLTKEAFENAISVIMAVGGSTNSVLHLLAIARTAGVDLTIDDFERIRQTVPVICDLKPSGKYVTVDLHKAGGIPQVMKLLLDAGMLHGECKTIEGKTIKEVLRDIPSKPKENQDVIRQISNPIYKKGHLAILKGNLASEGSVAKISGVKTPVLTGPARVFESEEECLTAILDNKVKAGDVVVVRYEGPVGGPGMREMLSPTSAIVGQGLGEKVALITDGRFSGGSYGLVVGHVAPEAAVGGTIGLVEEGDSITVDANKLLIQLNVEERELARRKQKWEKPKPRYKTGILGKYSRLVSSSSQGATTDQI.

Cys47 serves as a coordination point for [2Fe-2S] cluster. Asp79 contributes to the Mg(2+) binding site. Position 120 (Cys120) interacts with [2Fe-2S] cluster. 2 residues coordinate Mg(2+): Asp121 and Lys122. Lys122 bears the N6-carboxylysine mark. Cys192 lines the [2Fe-2S] cluster pocket. Glu444 is a binding site for Mg(2+). Ser470 acts as the Proton acceptor in catalysis.

This sequence belongs to the IlvD/Edd family. As to quaternary structure, homodimer. The cofactor is [2Fe-2S] cluster. Requires Mg(2+) as cofactor.

It carries out the reaction (2R)-2,3-dihydroxy-3-methylbutanoate = 3-methyl-2-oxobutanoate + H2O. The enzyme catalyses (2R,3R)-2,3-dihydroxy-3-methylpentanoate = (S)-3-methyl-2-oxopentanoate + H2O. It participates in amino-acid biosynthesis; L-isoleucine biosynthesis; L-isoleucine from 2-oxobutanoate: step 3/4. It functions in the pathway amino-acid biosynthesis; L-valine biosynthesis; L-valine from pyruvate: step 3/4. Functionally, functions in the biosynthesis of branched-chain amino acids. Catalyzes the dehydration of (2R,3R)-2,3-dihydroxy-3-methylpentanoate (2,3-dihydroxy-3-methylvalerate) into 2-oxo-3-methylpentanoate (2-oxo-3-methylvalerate) and of (2R)-2,3-dihydroxy-3-methylbutanoate (2,3-dihydroxyisovalerate) into 2-oxo-3-methylbutanoate (2-oxoisovalerate), the penultimate precursor to L-isoleucine and L-valine, respectively. The protein is Dihydroxy-acid dehydratase of Prochlorococcus marinus (strain NATL2A).